Here is a 331-residue protein sequence, read N- to C-terminus: MRHTVIFASAFATLVTASAFAADLPGKGITVQPIQSTISEETFQTLLVSRALEKLGYTVNKPSEVDYNVGYTSIASGDATFTAVNWQPLHDDMYAAAGGDNKFYREGVFVSGAAQGYLIDKKTAEQYNITNIAQLKDPKIAKIFDTNGDGKADMMGCSPGWGCEAVINHQNKAFDLQKTVEVSHGNYAAMMADTITRFKEGKPVLYYTWTPYWVSDVMKPGKDVVWLQVPFSSLPGEQKNIDTKLPNGANYGFPVNTMHIVANKAWAEKNPAAAKLFAIMKLPLADINAQNAMMHAGKSSEADVQGHVDGWINAHQQQFDGWVKEALAAQK.

Residues 1 to 21 (MRHTVIFASAFATLVTASAFA) form the signal peptide. Substrate contacts are provided by residues tryptophan 86, histidine 90, and 161-163 (WGC). Cysteine 157 and cysteine 163 are disulfide-bonded.

In terms of assembly, the complex is composed of two ATP-binding proteins (ProV), two transmembrane proteins (ProW) and a solute-binding protein (ProX).

Its subcellular location is the periplasm. Part of the ProU ABC transporter complex involved in glycine betaine and proline betaine uptake. Binds glycine betaine and proline betaine with high affinity. This is Glycine betaine/proline betaine-binding periplasmic protein (proX) from Salmonella typhimurium (strain LT2 / SGSC1412 / ATCC 700720).